An 843-amino-acid chain; its full sequence is Glycogen phosphorylase, brain form (843 aa).

At alanine 2 the chain carries N-acetylalanine. Serine 15 is subject to Phosphoserine; by PHK; in form phosphorylase A. AMP contacts are provided by aspartate 43, tyrosine 197, and arginine 310. Tyrosine 197 is subject to Phosphotyrosine. Tyrosine 473 is subject to Phosphotyrosine. Pyridoxal 5'-phosphate is bound at residue lysine 569. Residues 677–678 (TG) are pyridoxal 5'-phosphate. Residue lysine 681 is modified to N6-(pyridoxal phosphate)lysine.

This sequence belongs to the glycogen phosphorylase family. In terms of assembly, homodimer. Dimers associate into a tetramer to form the enzymatically active phosphorylase A. It depends on pyridoxal 5'-phosphate as a cofactor. Post-translationally, phosphorylated. Phosphorylation of Ser-15 converts phosphorylase B (unphosphorylated) to phosphorylase A.

The catalysed reaction is [(1-&gt;4)-alpha-D-glucosyl](n) + phosphate = [(1-&gt;4)-alpha-D-glucosyl](n-1) + alpha-D-glucose 1-phosphate. Its activity is regulated as follows. Activity of phosphorylase is controlled both by allosteric means (through the non-covalent binding of metabolites) and by covalent modification. Thus AMP allosterically activates, whereas ATP, ADP, and glucose-6-phosphate allosterically inhibit, phosphorylase B. Activated upon phosphorylation. In terms of biological role, glycogen phosphorylase that regulates glycogen mobilization. Phosphorylase is an important allosteric enzyme in carbohydrate metabolism. Enzymes from different sources differ in their regulatory mechanisms and in their natural substrates. However, all known phosphorylases share catalytic and structural properties. In Homo sapiens (Human), this protein is Glycogen phosphorylase, brain form.